We begin with the raw amino-acid sequence, 561 residues long: DNA ligase B (561 aa).

Catalysis depends on lysine 125, which acts as the N6-AMP-lysine intermediate.

Belongs to the NAD-dependent DNA ligase family. LigB subfamily.

It catalyses the reaction NAD(+) + (deoxyribonucleotide)n-3'-hydroxyl + 5'-phospho-(deoxyribonucleotide)m = (deoxyribonucleotide)n+m + AMP + beta-nicotinamide D-nucleotide.. Functionally, catalyzes the formation of phosphodiester linkages between 5'-phosphoryl and 3'-hydroxyl groups in double-stranded DNA using NAD as a coenzyme and as the energy source for the reaction. This chain is DNA ligase B, found in Salmonella enteritidis PT4 (strain P125109).